The following is a 356-amino-acid chain: Histidinol-phosphate aminotransferase (356 aa).

At K214 the chain carries N6-(pyridoxal phosphate)lysine.

Belongs to the class-II pyridoxal-phosphate-dependent aminotransferase family. Histidinol-phosphate aminotransferase subfamily. In terms of assembly, homodimer. Pyridoxal 5'-phosphate is required as a cofactor.

It carries out the reaction L-histidinol phosphate + 2-oxoglutarate = 3-(imidazol-4-yl)-2-oxopropyl phosphate + L-glutamate. It participates in amino-acid biosynthesis; L-histidine biosynthesis; L-histidine from 5-phospho-alpha-D-ribose 1-diphosphate: step 7/9. The polypeptide is Histidinol-phosphate aminotransferase (Shigella flexneri serotype 5b (strain 8401)).